The sequence spans 1132 residues: MMTSVSNDRCRGAREKPQMPTAHAAQSQKQVVQATAEQMRLAQVIFDKNDSDFEAKVKQLMEVTGKNQDECIVALHDCNGDVNKAINILLEGNSDTTSWETVGGKKKNFGRESSENKENREKRTEREASRGRGTNNRKGRGGNRVREFKGEENGIDCSQGDKPAERGKRARGRGFGRGRGRGTGRFSAQSMGTFNPADYSESMSTDGCGTKLAVWEAAQNGTDEGPEGLAKSHSMSQEPPSKSSYGLKGAWKNSVEEWTTEDWTEDLSETKVFTASSAPAENHVTPGHSIDLVALLHKPAPPTQATEVNSFETSQQQGFGQALVFTNSQHNNQMAPGTANSTSASSYSPQSLSSVLGSGFGELPQSNMVNISNSQILDKLKPPGLSPFPAASSAQQNDTASPPATTAAWDLKPSAPQPSVLSRLDFKSQPEPSPVLSQLSQRQQHQTQAVSVPPPGLESFSSLAKPRESTAGDGPSTVSRLLQLPNMTVENIVSAHQPQPKHIKLPKRRVPPASKVPVSAVEMPGSSDVTGLNVQFGALEFGSEPSLSEFGSAASASENSNQIPISLYPKSLSEPLNASFPMTSAVQSSTYTTSVVTSSTLTSSALSSTSPVTTSSSYDQSSVHTRIAYQSSASPPDSAPGSVANGHGGGRSQHTVDTTSSVPAPKKTDPSALPSVSTLPGPASCTALLPSSAQHTATLPSLTPAAAELSSSPLSQLSSSLSGHQNSMTSAHATRSTSTPHTHASVESTASSAAFSAAATSAPSAPSSGVVLPGSMSTVSSLCLGGTTVSVPSSSTRATALVTSGKAPPNLPQGVPPLLHNQYLVGPGGLLPAYPIYGYDELQMLQSRLPMDYYGIPFAAPTALASRDGNLANNPYSGDVTKFGRGDSASPAPPTTPAQAQQSQSQTHHTAQQPFLNPGLPPGYSYTGLPYYTGVPSAFQYGPTMFVPPTSAKQHGVALSTPPTPFQQASGYGQHAYSTGYDDLTQGTAAGDYTKGGYGGSSQAPNKSTGSGPGKGVSVSSGTGLPDMTGSVYNKTQTFDKQGFHAGTPPPFSLPSALGSTGPLAPAAAPGYAPAPFLHIMPAHQQPHSQLLHHHLQQDAPSGSGQRSQPSSLQPKSQASKPTYGSAPYWTN.

The disordered stretch occupies residues 1-29 (MMTSVSNDRCRGAREKPQMPTAHAAQSQK). The segment covering 8 to 17 (DRCRGAREKP) has biased composition (basic and acidic residues). Positions 48–92 (KNDSDFEAKVKQLMEVTGKNQDECIVALHDCNGDVNKAINILLEG) constitute a UBA domain. 10 disordered regions span residues 95-202 (DTTS…YSES), 221-248 (GTDEGPEGLAKSHSMSQEPPSKSSYGLK), 331-351 (NNQMAPGTANSTSASSYSPQS), 380-479 (LKPP…STVS), 602-679 (TSSA…VSTL), 713-749 (PLSQLSSSLSGHQNSMTSAHATRSTSTPHTHASVEST), 875-919 (PYSG…LNPG), 996-1033 (GGYGGSSQAPNKSTGSGPGKGVSVSSGTGLPDMTGSVY), 1040-1059 (DKQGFHAGTPPPFSLPSALG), and 1087-1132 (PHSQ…YWTN). The span at 109–130 (FGRESSENKENREKRTEREASR) shows a compositional bias: basic and acidic residues. An Omega-N-methylarginine modification is found at arginine 166. Residues 168-182 (KRARGRGFGRGRGRG) are compositionally biased toward basic residues. Polar residues-rich tracts occupy residues 233–244 (HSMSQEPPSKSS) and 331–340 (NNQMAPGTAN). The span at 341–351 (STSASSYSPQS) shows a compositional bias: low complexity. Residues 392-404 (SSAQQNDTASPPA) are compositionally biased toward polar residues. Phosphoserine is present on residues serine 433 and serine 440. Low complexity-rich tracts occupy residues 436-448 (LSQLSQRQQHQTQ) and 602-618 (TSSALSSTSPVTTSSSY). Positions 619 to 630 (DQSSVHTRIAYQ) are enriched in polar residues. A Phosphoserine modification is found at serine 631. Residues 631–644 (SSASPPDSAPGSVA) show a composition bias toward low complexity. Positions 652–662 (SQHTVDTTSSV) are enriched in polar residues. Residues 713–722 (PLSQLSSSLS) show a composition bias toward low complexity. Positions 723–742 (GHQNSMTSAHATRSTSTPHT) are enriched in polar residues. A compositionally biased stretch (low complexity) spans 897–914 (PAQAQQSQSQTHHTAQQP). The segment covering 1101–1115 (PSGSGQRSQPSSLQP) has biased composition (low complexity). The segment covering 1116 to 1132 (KSQASKPTYGSAPYWTN) has biased composition (polar residues).

As to quaternary structure, may interact with ANXA2.

It is found in the nucleus. Its subcellular location is the chromosome. It localises to the cytoplasm. Functionally, recruits the ubiquitination machinery to RNA polymerase II for polyubiquitination, removal and degradation, when the transcription-coupled nucleotide excision repair (TC-NER) machinery fails to resolve DNA damage. May promote the degradation of ANXA2. In Mus musculus (Mouse), this protein is Ubiquitin-associated protein 2.